The chain runs to 451 residues: 3-phosphoshikimate 1-carboxyvinyltransferase (451 aa).

3-phosphoshikimate contacts are provided by Lys-38, Ser-39, and Arg-43. Lys-38 contributes to the phosphoenolpyruvate binding site. The phosphoenolpyruvate site is built by Gly-111 and Arg-140. Residues Ser-185, Gln-187, Asp-335, and Lys-362 each contribute to the 3-phosphoshikimate site. Gln-187 is a binding site for phosphoenolpyruvate. Asp-335 serves as the catalytic Proton acceptor. Phosphoenolpyruvate is bound by residues Arg-366 and Arg-408.

Belongs to the EPSP synthase family. In terms of assembly, monomer.

It is found in the cytoplasm. The catalysed reaction is 3-phosphoshikimate + phosphoenolpyruvate = 5-O-(1-carboxyvinyl)-3-phosphoshikimate + phosphate. It functions in the pathway metabolic intermediate biosynthesis; chorismate biosynthesis; chorismate from D-erythrose 4-phosphate and phosphoenolpyruvate: step 6/7. Functionally, catalyzes the transfer of the enolpyruvyl moiety of phosphoenolpyruvate (PEP) to the 5-hydroxyl of shikimate-3-phosphate (S3P) to produce enolpyruvyl shikimate-3-phosphate and inorganic phosphate. This Crocosphaera subtropica (strain ATCC 51142 / BH68) (Cyanothece sp. (strain ATCC 51142)) protein is 3-phosphoshikimate 1-carboxyvinyltransferase.